The primary structure comprises 456 residues: Esterase MT1326 (456 aa).

3 consecutive LysM domains span residues 3 to 50 (STHA…RLIM), 54 to 101 (TRYT…RLIM), and 105 to 152 (TRYT…VLVI). Catalysis depends on residues S294, D391, and H425.

This sequence belongs to the AB hydrolase superfamily.

The protein resides in the secreted. Its subcellular location is the cell wall. The enzyme catalyses a fatty acid ester + H2O = an aliphatic alcohol + a fatty acid + H(+). In terms of biological role, exhibits lipolytic activity with medium chain length esters as optimum substrates. In Mycobacterium tuberculosis (strain CDC 1551 / Oshkosh), this protein is Esterase MT1326.